Here is a 461-residue protein sequence, read N- to C-terminus: Smoothelin-like protein 2 (461 aa).

Residues 55–88 are a coiled coil; the sequence is PLARTVADLQRDNQRLQAQLERLTRQVEALGLAS. Disordered stretches follow at residues 87-193 and 227-248; these read ASGM…LRLP and LNPSPSEVITPWTPSPSEKNSS. A compositionally biased stretch (pro residues) spans 94–107; sequence PGTPGTPSPPPAPG. At threonine 96 the chain carries Phosphothreonine. 3 positions are modified to phosphoserine: serine 101, serine 129, and serine 134. Positions 134-147 are enriched in basic and acidic residues; that stretch reads SLDHDEASESEMRK. 2 positions are modified to phosphoserine: serine 256 and serine 269. A disordered region spans residues 260–307; sequence AVTASKHSNSPPLVTPPQSPVSPQPPAITQVHRQGERRRELVRSQTLP. A compositionally biased stretch (pro residues) spans 272 to 285; that stretch reads LVTPPQSPVSPQPP. Threonine 274 bears the Phosphothreonine mark. Phosphoserine is present on serine 278. Residues 292–301 show a composition bias toward basic and acidic residues; it reads RQGERRRELV. Serine 344 is modified (phosphoserine). The Calponin-homology (CH) domain maps to 351-458; it reads SSIKQILLEW…YVQSLYNHLR (108 aa).

The protein belongs to the smoothelin family.

This is Smoothelin-like protein 2 (SMTNL2) from Homo sapiens (Human).